Reading from the N-terminus, the 283-residue chain is Prolyl 4-hydroxylase 1 (283 aa).

The Cytoplasmic portion of the chain corresponds to methionine 1 to lysine 6. The helical; Signal-anchor for type II membrane protein transmembrane segment at isoleucine 7–leucine 27 threads the bilayer. Over alanine 28–serine 283 the chain is Lumenal. Residues asparagine 162–glutamine 279 enclose the Fe2OG dioxygenase domain. Residues histidine 180, aspartate 182, and histidine 260 each coordinate Fe cation. A 2-oxoglutarate-binding site is contributed by lysine 270.

The protein belongs to the P4HA family. It depends on Fe(2+) as a cofactor. L-ascorbate serves as cofactor.

The protein localises to the endoplasmic reticulum membrane. The catalysed reaction is L-prolyl-[collagen] + 2-oxoglutarate + O2 = trans-4-hydroxy-L-prolyl-[collagen] + succinate + CO2. Catalyzes the post-translational formation of 4-hydroxyproline in -Xaa-Pro-Gly- sequences in proline-rich peptide sequences of plant glycoproteins and other proteins. Hydroxylates preferentially prolines in second positions in the -Pro-Pro-Gly-triplets. Hydroxyprolines are important constituent of many plant cell wall glycoproteins such as extensins, hydroxyproline-rich glycoproteins, lectins and arabinogalactan proteins. Can hydroxylate collagen-like peptides and hypoxia-inducible transcription factor peptides. In Arabidopsis thaliana (Mouse-ear cress), this protein is Prolyl 4-hydroxylase 1.